The sequence spans 711 residues: Pentatricopeptide repeat-containing protein At5g46580, chloroplastic (711 aa).

The N-terminal 43 residues, 1–43, are a transit peptide targeting the chloroplast; the sequence is MATVLTTAIDVCFNPQNSDTKKHSLFLKPSLFRQSRSRKLNIS. PPR repeat units lie at residues 185–219, 220–254, 255–289, 290–324, 325–359, 360–394, 395–425, 431–465, 466–500, and 501–535; these read ETIF…GVEL, DNIT…GLMP, DEVT…GWKP, DAIA…DVKP, NVVV…GLTP, NEKT…KWPM, DFIL…MKES, DNFS…GVQV, NVMG…GVKP, and DDRL…NKKL. The region spanning 614-696 is the Smr domain; that stretch reads LDVRSLSVGA…IFVATKEDLV (83 aa).

It belongs to the PPR family. P subfamily.

It is found in the plastid. It localises to the chloroplast. This Arabidopsis thaliana (Mouse-ear cress) protein is Pentatricopeptide repeat-containing protein At5g46580, chloroplastic.